Here is a 140-residue protein sequence, read N- to C-terminus: 3-hydroxyacyl-[acyl-carrier-protein] dehydratase FabZ (140 aa).

The active site involves H48.

The protein belongs to the thioester dehydratase family. FabZ subfamily.

The protein resides in the cytoplasm. The enzyme catalyses a (3R)-hydroxyacyl-[ACP] = a (2E)-enoyl-[ACP] + H2O. Involved in unsaturated fatty acids biosynthesis. Catalyzes the dehydration of short chain beta-hydroxyacyl-ACPs and long chain saturated and unsaturated beta-hydroxyacyl-ACPs. This is 3-hydroxyacyl-[acyl-carrier-protein] dehydratase FabZ from Latilactobacillus sakei subsp. sakei (strain 23K) (Lactobacillus sakei subsp. sakei).